The chain runs to 176 residues: MAENEHFRNGIDYVELVNQEGHTFHYICRAGNMNELVDMAPVILRNLDLLFQYDHEGRQCTHIAAEYDVSNAVMKIELLVMLGADINSRELKFGNTLLHIAAGTENYQLAEWLCKKPGVELGAINFLYKTAYHIAYERQNARMMEILRVNGAVCDDPIDIDESDETSSESNEGISI.

3 ANK repeats span residues 56–88, 93–123, and 127–156; these read EGRQ…DINS, FGNT…ELGA, and LYKT…VCDD.

This sequence belongs to the polydnaviridae I-Kappa-B-like protein family.

Its function is as follows. Suppresses the host immune response through NF-kappa-B inactivation. Possesses ankyrin repeat domains required for NF-kappa-B binding but lacks the regulatory regions required for dissociation from NF-kappa-B and degradation. Therefore, prevents host NF-kappa-B release and subsequent activation. In Microplitis demolitor (Parasitoid wasp), this protein is I-Kappa-B like protein G1 (G3).